A 338-amino-acid chain; its full sequence is Ketol-acid reductoisomerase (NADP(+)) (338 aa).

Residues 1–181 (MKVFYDKDAD…GGGRAGIIET (181 aa)) enclose the KARI N-terminal Rossmann domain. NADP(+) contacts are provided by residues 24–27 (YGSQ), R47, and S52. Residue H107 is part of the active site. G133 provides a ligand contact to NADP(+). The region spanning 182 to 327 (NFREETETDL…SKLRAMMPWI (146 aa)) is the KARI C-terminal knotted domain. Residues D190, E194, E226, and E230 each contribute to the Mg(2+) site. S251 contributes to the substrate binding site.

The protein belongs to the ketol-acid reductoisomerase family. Requires Mg(2+) as cofactor.

It catalyses the reaction (2R)-2,3-dihydroxy-3-methylbutanoate + NADP(+) = (2S)-2-acetolactate + NADPH + H(+). The enzyme catalyses (2R,3R)-2,3-dihydroxy-3-methylpentanoate + NADP(+) = (S)-2-ethyl-2-hydroxy-3-oxobutanoate + NADPH + H(+). The protein operates within amino-acid biosynthesis; L-isoleucine biosynthesis; L-isoleucine from 2-oxobutanoate: step 2/4. It participates in amino-acid biosynthesis; L-valine biosynthesis; L-valine from pyruvate: step 2/4. In terms of biological role, involved in the biosynthesis of branched-chain amino acids (BCAA). Catalyzes an alkyl-migration followed by a ketol-acid reduction of (S)-2-acetolactate (S2AL) to yield (R)-2,3-dihydroxy-isovalerate. In the isomerase reaction, S2AL is rearranged via a Mg-dependent methyl migration to produce 3-hydroxy-3-methyl-2-ketobutyrate (HMKB). In the reductase reaction, this 2-ketoacid undergoes a metal-dependent reduction by NADPH to yield (R)-2,3-dihydroxy-isovalerate. The polypeptide is Ketol-acid reductoisomerase (NADP(+)) (Burkholderia thailandensis (strain ATCC 700388 / DSM 13276 / CCUG 48851 / CIP 106301 / E264)).